Here is a 152-residue protein sequence, read N- to C-terminus: Deoxyuridine 5'-triphosphate nucleotidohydrolase (152 aa).

Substrate is bound by residues 71-73 (RSG), Asn-84, 88-90 (LID), and Met-98.

The protein belongs to the dUTPase family. The cofactor is Mg(2+).

It carries out the reaction dUTP + H2O = dUMP + diphosphate + H(+). Its pathway is pyrimidine metabolism; dUMP biosynthesis; dUMP from dCTP (dUTP route): step 2/2. In terms of biological role, this enzyme is involved in nucleotide metabolism: it produces dUMP, the immediate precursor of thymidine nucleotides and it decreases the intracellular concentration of dUTP so that uracil cannot be incorporated into DNA. This is Deoxyuridine 5'-triphosphate nucleotidohydrolase from Aeromonas hydrophila subsp. hydrophila (strain ATCC 7966 / DSM 30187 / BCRC 13018 / CCUG 14551 / JCM 1027 / KCTC 2358 / NCIMB 9240 / NCTC 8049).